Consider the following 447-residue polypeptide: Protein disulfide-isomerase like 2-2 (447 aa).

The first 26 residues, 1–26 (MERKMYKSTVFPICCLLFALFDRGNA), serve as a signal peptide directing secretion. Thioredoxin domains lie at 27–139 (LYGS…QIKA) and 161–275 (KKKS…QLES). Active-site nucleophile residues include cysteine 62 and cysteine 65. A disulfide bond links cysteine 62 and cysteine 65. The tract at residues 146 to 170 (DGKTSGTKNGGGSSEKKKSEPSASV) is disordered. An N-linked (GlcNAc...) asparagine glycan is attached at asparagine 173. Residues cysteine 197 and cysteine 200 each act as nucleophile in the active site. Cysteine 197 and cysteine 200 form a disulfide bridge. Positions 444–447 (KDDL) match the Prevents secretion from ER motif.

The protein belongs to the protein disulfide isomerase family. Widely expressed.

The protein resides in the endoplasmic reticulum lumen. It carries out the reaction Catalyzes the rearrangement of -S-S- bonds in proteins.. Functionally, acts as a protein-folding catalyst that interacts with nascent polypeptides to catalyze the formation, isomerization, and reduction or oxidation of disulfide bonds. This chain is Protein disulfide-isomerase like 2-2 (PDIL2-2), found in Arabidopsis thaliana (Mouse-ear cress).